The following is a 340-amino-acid chain: DNA-directed RNA polymerase subunit alpha (340 aa).

An alpha N-terminal domain (alpha-NTD) region spans residues 1–238 (MADTFVAKNW…EQLTVFVNFD (238 aa)). Residues 253 to 340 (AKLNENLFRS…QAPAPAQPKA (88 aa)) form an alpha C-terminal domain (alpha-CTD) region.

The protein belongs to the RNA polymerase alpha chain family. Homodimer. The RNAP catalytic core consists of 2 alpha, 1 beta, 1 beta' and 1 omega subunit. When a sigma factor is associated with the core the holoenzyme is formed, which can initiate transcription.

The catalysed reaction is RNA(n) + a ribonucleoside 5'-triphosphate = RNA(n+1) + diphosphate. DNA-dependent RNA polymerase catalyzes the transcription of DNA into RNA using the four ribonucleoside triphosphates as substrates. The chain is DNA-directed RNA polymerase subunit alpha from Myxococcus xanthus (strain DK1622).